A 432-amino-acid chain; its full sequence is Patatin-like phospholipase domain-containing protein 5 (432 aa).

A PNPLA domain is found at 12–181 (LSFSGSGYMG…SNNLPFSDCP (170 aa)). Residues 16 to 21 (GSGYMG) carry the GXGXXG motif. A GXSXG motif is present at residues 47–51 (GSSSG). Ser49 (nucleophile) is an active-site residue. The active-site Proton acceptor is the Asp168. Positions 168 to 170 (DGA) match the DGA/G motif. The tract at residues 404–423 (ADSGLLRQQRGTAPSGNRPL) is disordered.

It catalyses the reaction a triacylglycerol + H2O = a diacylglycerol + a fatty acid + H(+). Its function is as follows. Has abundant triacylglycerol lipase activity. The polypeptide is Patatin-like phospholipase domain-containing protein 5 (Mus musculus (Mouse)).